Reading from the N-terminus, the 499-residue chain is Pleckstrin homology domain-containing family O member 2 (499 aa).

The segment covering 1-11 (MEEEGVKEGGQ) has biased composition (basic and acidic residues). The disordered stretch occupies residues 1 to 21 (MEEEGVKEGGQRPRSAQTADK). The 102-residue stretch at 18-119 (TADKAGWIKK…WIKALNEGIN (102 aa)) folds into the PH domain. Ser-167 bears the Phosphoserine mark. Residues 170–419 (LSRLDLDVPD…RRRQPGEQLH (250 aa)) form a disordered region. The span at 201-212 (RPPMPPAKPSPA) shows a compositional bias: pro residues. Residues 229-238 (SAPAPVPASS) show a composition bias toward low complexity. Phosphoserine is present on residues Ser-237 and Ser-238. Acidic residues predominate over residues 246 to 258 (EDLETPVVEDSDS). Residue Ser-273 is modified to Phosphoserine. A phosphothreonine mark is found at Thr-298 and Thr-311. Low complexity-rich tracts occupy residues 329–349 (EASG…GPAE) and 367–386 (AAGP…TLPP). Ser-399 is subject to Phosphoserine. Positions 416–492 (EQLHRAQLEV…LREKRRELVT (77 aa)) form a coiled coil.

In Bos taurus (Bovine), this protein is Pleckstrin homology domain-containing family O member 2 (PLEKHO2).